A 172-amino-acid chain; its full sequence is AIG2-like protein B (172 aa).

Position 15–20 (15–20 (YGSFQE)) interacts with substrate. Catalysis depends on Glu83, which acts as the Proton acceptor. Residues 146–165 (KRNPQGKGRDDFSNVLKEED) show a composition bias toward basic and acidic residues. The interval 146–172 (KRNPQGKGRDDFSNVLKEEDPANAPSS) is disordered.

Belongs to the gamma-glutamylcyclotransferase family. As to expression, expressed in flowerss, leaves, stems, seeds and roots.

The protein resides in the cell membrane. Its function is as follows. Putative gamma-glutamylcyclotransferase. The polypeptide is AIG2-like protein B (Arabidopsis thaliana (Mouse-ear cress)).